Consider the following 561-residue polypeptide: Ribulokinase (561 aa).

The protein belongs to the ribulokinase family.

The catalysed reaction is D-ribulose + ATP = D-ribulose 5-phosphate + ADP + H(+). The enzyme catalyses L-ribulose + ATP = L-ribulose 5-phosphate + ADP + H(+). It functions in the pathway carbohydrate degradation; L-arabinose degradation via L-ribulose; D-xylulose 5-phosphate from L-arabinose (bacterial route): step 2/3. In Shouchella clausii (strain KSM-K16) (Alkalihalobacillus clausii), this protein is Ribulokinase.